The primary structure comprises 138 residues: Large ribosomal subunit protein eL14B (138 aa).

S2 bears the N-acetylserine mark.

It belongs to the eukaryotic ribosomal protein eL14 family. Component of the large ribosomal subunit (LSU). Mature yeast ribosomes consist of a small (40S) and a large (60S) subunit. The 40S small subunit contains 1 molecule of ribosomal RNA (18S rRNA) and 33 different proteins (encoded by 57 genes). The large 60S subunit contains 3 rRNA molecules (25S, 5.8S and 5S rRNA) and 46 different proteins (encoded by 81 genes). In terms of processing, N-terminally acetylated by acetyltransferase NatA.

It is found in the cytoplasm. Functionally, component of the ribosome, a large ribonucleoprotein complex responsible for the synthesis of proteins in the cell. The small ribosomal subunit (SSU) binds messenger RNAs (mRNAs) and translates the encoded message by selecting cognate aminoacyl-transfer RNA (tRNA) molecules. The large subunit (LSU) contains the ribosomal catalytic site termed the peptidyl transferase center (PTC), which catalyzes the formation of peptide bonds, thereby polymerizing the amino acids delivered by tRNAs into a polypeptide chain. The nascent polypeptides leave the ribosome through a tunnel in the LSU and interact with protein factors that function in enzymatic processing, targeting, and the membrane insertion of nascent chains at the exit of the ribosomal tunnel. The chain is Large ribosomal subunit protein eL14B from Saccharomyces cerevisiae (strain ATCC 204508 / S288c) (Baker's yeast).